Reading from the N-terminus, the 354-residue chain is tRNA N6-adenosine threonylcarbamoyltransferase (354 aa).

The Fe cation site is built by His111 and His115. Substrate contacts are provided by residues 134-138 (LVSGG), Asp167, Gly180, and Asn279. A Fe cation-binding site is contributed by Asp319.

This sequence belongs to the KAE1 / TsaD family. Fe(2+) is required as a cofactor.

It localises to the cytoplasm. The enzyme catalyses L-threonylcarbamoyladenylate + adenosine(37) in tRNA = N(6)-L-threonylcarbamoyladenosine(37) in tRNA + AMP + H(+). Required for the formation of a threonylcarbamoyl group on adenosine at position 37 (t(6)A37) in tRNAs that read codons beginning with adenine. Is involved in the transfer of the threonylcarbamoyl moiety of threonylcarbamoyl-AMP (TC-AMP) to the N6 group of A37, together with TsaE and TsaB. TsaD likely plays a direct catalytic role in this reaction. The protein is tRNA N6-adenosine threonylcarbamoyltransferase of Neisseria meningitidis serogroup A / serotype 4A (strain DSM 15465 / Z2491).